The chain runs to 805 residues: MQFPESWLRSLVNPSIGTDELAHRLTMAGLEVEETEPAAPPFTGVVVAHIVDIAPHPDADKLRVCQVDDGSGALLQIVCGAPNAAAGLTVPLARVGAELPGGMKIGVAKMRGVQSSGMLCSARELGLSQDHAGLLELPAALRPGTDIRAALDLDDTLFTLKLTPNRADCLSILGVAREVAALTGTPLTAPAAEPVPVTIDHRLPVAIQAPDLCGRFAGRVIQGVNARAATPEWMKTRLERAGQRSVSALVDISNYVMLEVGRPSHVFDLDKIGGDLSVRWAREGETLELLNGQAVALDPKVGVVVAGEQVESLAGIMGGEATSVTLDTRNIYLEAAFWWPGAIAGRARRYKFSSEASHRFERGVDYASIPEHIELITRLILDICGGQAGPVDDQCVNLPVREPVRMRLARCHRVLGVAVERAEVAQIFTRLGLPFQEQGDDFVVTPPSYRFDIEIEEDLIEEVARVYGFERIPDVPPVARAKMHAQPEARRGAHAVRRLVAARDYQEVVNYSFVEAAWERDYAGNDNPVRLVNPIASHLSVMRSSLIAGLVAIVRHNANRKQSRVRLFELGRVFHRDPQLADGPLEVAGVRQPLMLAGVAWGGAVEEQWGVPHRQVDFYDVKQDVEALFGARADALRFVADRYPALHPGRSARIELDGQPIGWLGELHPQWTQQADLHHAPVVFELDFEALAERRLPAVRELSRQPAVVRDLALWVDAKLPAQAMLDTVAAAIARDPQLSVVQDAQVFDVWREKPVAGQTVTEKSLAFRFWLQDTEVTLDEARVADCIARIKDALVAAHNARQRA.

The 110-residue stretch at 39–148 (APPFTGVVVA…AALRPGTDIR (110 aa)) folds into the tRNA-binding domain. Positions 399–474 (PVREPVRMRL…RVYGFERIPD (76 aa)) constitute a B5 domain. Positions 452, 458, 461, and 462 each coordinate Mg(2+). Residues 703 to 804 (SRQPAVVRDL…LVAAHNARQR (102 aa)) enclose the FDX-ACB domain.

Belongs to the phenylalanyl-tRNA synthetase beta subunit family. Type 1 subfamily. Tetramer of two alpha and two beta subunits. Mg(2+) is required as a cofactor.

It localises to the cytoplasm. It catalyses the reaction tRNA(Phe) + L-phenylalanine + ATP = L-phenylalanyl-tRNA(Phe) + AMP + diphosphate + H(+). The sequence is that of Phenylalanine--tRNA ligase beta subunit from Bordetella bronchiseptica (strain ATCC BAA-588 / NCTC 13252 / RB50) (Alcaligenes bronchisepticus).